The sequence spans 370 residues: uncharacterized protein (370 aa).

At lysine 207 the chain carries N6-(pyridoxal phosphate)lysine.

This sequence belongs to the class-V pyridoxal-phosphate-dependent aminotransferase family. Pyridoxal 5'-phosphate is required as a cofactor.

This is an uncharacterized protein from Bacillus subtilis (strain 168).